The primary structure comprises 290 residues: Shikimate dehydrogenase (NADP(+)) (290 aa).

Shikimate contacts are provided by residues 19–21 (SLS) and Ser-65. The Proton acceptor role is filled by Lys-69. Shikimate is bound by residues Asn-90 and Asp-105. NADP(+)-binding positions include 129–133 (GAGGA) and Leu-231. Tyr-233 contributes to the shikimate binding site. Gly-254 is a binding site for NADP(+).

The protein belongs to the shikimate dehydrogenase family. Homodimer.

The enzyme catalyses shikimate + NADP(+) = 3-dehydroshikimate + NADPH + H(+). It participates in metabolic intermediate biosynthesis; chorismate biosynthesis; chorismate from D-erythrose 4-phosphate and phosphoenolpyruvate: step 4/7. Functionally, involved in the biosynthesis of the chorismate, which leads to the biosynthesis of aromatic amino acids. Catalyzes the reversible NADPH linked reduction of 3-dehydroshikimate (DHSA) to yield shikimate (SA). This Latilactobacillus sakei subsp. sakei (strain 23K) (Lactobacillus sakei subsp. sakei) protein is Shikimate dehydrogenase (NADP(+)).